A 107-amino-acid chain; its full sequence is MTKSELVAQLASRFPQLVLKDADFAVKTMLDAMSDALAKGHRIEIRGFGSFGLNRRPARVGRNPKSGEKVQVPEKFVPHFKPGKELRERVDGRAGEPLKADDPDDDR.

Positions 76-107 (FVPHFKPGKELRERVDGRAGEPLKADDPDDDR) are disordered. The span at 82–101 (PGKELRERVDGRAGEPLKAD) shows a compositional bias: basic and acidic residues.

This sequence belongs to the bacterial histone-like protein family. As to quaternary structure, heterodimer of an alpha and a beta chain.

This protein is one of the two subunits of integration host factor, a specific DNA-binding protein that functions in genetic recombination as well as in transcriptional and translational control. This chain is Integration host factor subunit beta, found in Burkholderia cenocepacia (strain HI2424).